The sequence spans 648 residues: Pesticidal crystal protein Cry19Aa (648 aa).

It belongs to the delta endotoxin family.

Its function is as follows. Promotes colloidosmotic lysis by binding to the midgut epithelial cells of mosquitos. The protein is Pesticidal crystal protein Cry19Aa (cry19Aa) of Bacillus thuringiensis subsp. jegathesan.